The following is a 300-amino-acid chain: Small ribosomal subunit protein uS2 (300 aa).

A disordered region spans residues 228 to 300 (RAGLSADKDA…PAAEAPSTEA (73 aa)). The segment covering 258-300 (AAPAAEAAPAAEAAPAAEAAPAAEAQAAPAAEAPAAEAPSTEA) has biased composition (low complexity).

It belongs to the universal ribosomal protein uS2 family.

This chain is Small ribosomal subunit protein uS2, found in Rhodococcus jostii (strain RHA1).